Reading from the N-terminus, the 412-residue chain is Argininosuccinate synthase (412 aa).

ATP contacts are provided by residues 11–19 and Ala37; that span reads AYSGGLDTS. The L-citrulline site is built by Tyr88 and Ser93. Residue 116–124 coordinates ATP; that stretch reads SHGATGKGN. The L-aspartate site is built by Thr120, Asn124, and Asp125. Asn124 lines the L-citrulline pocket. Residues Arg128, Ser181, Ser190, Glu271, and Tyr283 each contribute to the L-citrulline site.

It belongs to the argininosuccinate synthase family. As to quaternary structure, homotetramer.

The protein localises to the cytoplasm. The protein resides in the cytosol. The catalysed reaction is L-citrulline + L-aspartate + ATP = 2-(N(omega)-L-arginino)succinate + AMP + diphosphate + H(+). It participates in amino-acid biosynthesis; L-arginine biosynthesis; L-arginine from L-ornithine and carbamoyl phosphate: step 2/3. The protein operates within nitrogen metabolism; urea cycle; (N(omega)-L-arginino)succinate from L-aspartate and L-citrulline: step 1/1. Functionally, one of the enzymes of the urea cycle, the metabolic pathway transforming neurotoxic amonia produced by protein catabolism into inocuous urea in the liver of ureotelic animals. Catalyzes the formation of arginosuccinate from aspartate, citrulline and ATP and together with ASL it is responsible for the biosynthesis of arginine in most body tissues. The chain is Argininosuccinate synthase from Xenopus tropicalis (Western clawed frog).